The chain runs to 302 residues: D-alanine--D-alanine ligase (302 aa).

An ATP-grasp domain is found at 104–296 (KLVFERFAIP…FPDLVTWLVE (193 aa)). 130-183 (AMARPYVVKPLDQGSSVGVTIVTSETNDLPFSRDDWPYGRQVMVERFIPGRELT) contributes to the ATP binding site. Asp251, Glu263, and Asn265 together coordinate Mg(2+).

This sequence belongs to the D-alanine--D-alanine ligase family. The cofactor is Mg(2+). Requires Mn(2+) as cofactor.

Its subcellular location is the cytoplasm. It catalyses the reaction 2 D-alanine + ATP = D-alanyl-D-alanine + ADP + phosphate + H(+). It functions in the pathway cell wall biogenesis; peptidoglycan biosynthesis. Cell wall formation. The polypeptide is D-alanine--D-alanine ligase (Rhodospirillum rubrum (strain ATCC 11170 / ATH 1.1.1 / DSM 467 / LMG 4362 / NCIMB 8255 / S1)).